Here is a 141-residue protein sequence, read N- to C-terminus: Large ribosomal subunit protein uL13 (141 aa).

Belongs to the universal ribosomal protein uL13 family. As to quaternary structure, part of the 50S ribosomal subunit.

In terms of biological role, this protein is one of the early assembly proteins of the 50S ribosomal subunit, although it is not seen to bind rRNA by itself. It is important during the early stages of 50S assembly. The polypeptide is Large ribosomal subunit protein uL13 (Helicobacter acinonychis (strain Sheeba)).